Reading from the N-terminus, the 92-residue chain is Long neurotoxin 2 (92 aa).

An N-terminal signal peptide occupies residues 1–21; the sequence is MKTLLLTLVVVTIVCLDLGYT. Cystine bridges form between Cys24–Cys42, Cys35–Cys63, Cys48–Cys52, Cys67–Cys79, and Cys80–Cys85.

The protein belongs to the three-finger toxin family. Long-chain subfamily. Type II alpha-neurotoxin sub-subfamily. As to expression, expressed by the venom gland.

Its subcellular location is the secreted. Binds with high affinity to muscular (alpha-1/CHRNA1) and neuronal (alpha-7/CHRNA7) nicotinic acetylcholine receptor (nAChR) and inhibits acetylcholine from binding to the receptor, thereby impairing neuromuscular and neuronal transmission. The protein is Long neurotoxin 2 of Oxyuranus microlepidotus (Inland taipan).